A 355-amino-acid polypeptide reads, in one-letter code: MPFLGQDWRSPGQSWVKTADGWKRFLDEKSGSFVSDLGSYCSKEVYNKENLFNSLNYDVAAKKRKKDMLNSKTKTQYFHQEKWIYVHKGSTKERHGYCTLGEAFNRLDFSTAILDSRRFNYVVRLLELIAKSQLTSLSGIAQKNFMNILEKVVLKVLEDQQNIRLIRELLQTLYTSLCTLVQRVGKSVLVGNINMWVYRMETILHWQQQLNNIQITRPAFKGLTFTDLPLCLQLNIMQRLSDGRDLVSLGQVAPDLHVLSEDRLLWKKLCQYHFSERQIRKRLILSDKGQLDWKKMYFKLARCYPRKEQYGDTLQLCRHCHILSWKGTDHPCTANNPESCSISLSPQDFINLFKF.

The Nuclear localization signal signature appears at 62 to 67 (KKRKKD). Residues 169-173 (LLQTL) carry the Nuclear export signal motif. One can recognise an F-box domain in the interval 223–271 (LTFTDLPLCLQLNIMQRLSDGRDLVSLGQVAPDLHVLSEDRLLWKKLCQ). The Bipartite nuclear localization signal signature appears at 280–295 (RKRLILSDKGQLDWKK).

In terms of assembly, part of the SCF (SKP1-CUL1-F-box) E3 ubiquitin-protein ligase complex SCF(FBXO32) formed of CUL1, SKP1, RBX1 and FBXO32.

It localises to the cytoplasm. The protein localises to the nucleus. It participates in protein modification; protein ubiquitination. Substrate recognition component of a SCF (SKP1-CUL1-F-box protein) E3 ubiquitin-protein ligase complex which mediates the ubiquitination and subsequent proteasomal degradation of target proteins. Probably recognizes and binds to phosphorylated target proteins during skeletal muscle atrophy. Recognizes TERF1. In Bos taurus (Bovine), this protein is F-box only protein 32 (FBXO32).